Consider the following 101-residue polypeptide: MLSLAHFLVLGAILFAISIVGIFLNRKNVIVLLMAIELMLLAVNINFVAFSHYLGDLAGQVFVFFILTVAAAESAIGLAILVVLFRNLDTINVDDMDTLKG.

The next 3 membrane-spanning stretches (helical) occupy residues 4–24 (LAHFLVLGAILFAISIVGIFL), 30–50 (IVLLMAIELMLLAVNINFVAF), and 61–81 (VFVFFILTVAAAESAIGLAIL).

Belongs to the complex I subunit 4L family. NDH-1 is composed of 14 different subunits. Subunits NuoA, H, J, K, L, M, N constitute the membrane sector of the complex.

The protein localises to the cell inner membrane. It catalyses the reaction a quinone + NADH + 5 H(+)(in) = a quinol + NAD(+) + 4 H(+)(out). NDH-1 shuttles electrons from NADH, via FMN and iron-sulfur (Fe-S) centers, to quinones in the respiratory chain. The immediate electron acceptor for the enzyme in this species is believed to be ubiquinone. Couples the redox reaction to proton translocation (for every two electrons transferred, four hydrogen ions are translocated across the cytoplasmic membrane), and thus conserves the redox energy in a proton gradient. In Cupriavidus necator (strain ATCC 17699 / DSM 428 / KCTC 22496 / NCIMB 10442 / H16 / Stanier 337) (Ralstonia eutropha), this protein is NADH-quinone oxidoreductase subunit K.